A 94-amino-acid chain; its full sequence is Pyrimidine/purine nucleoside phosphorylase (94 aa).

The protein belongs to the nucleoside phosphorylase PpnP family.

The enzyme catalyses a purine D-ribonucleoside + phosphate = a purine nucleobase + alpha-D-ribose 1-phosphate. It carries out the reaction adenosine + phosphate = alpha-D-ribose 1-phosphate + adenine. The catalysed reaction is cytidine + phosphate = cytosine + alpha-D-ribose 1-phosphate. It catalyses the reaction guanosine + phosphate = alpha-D-ribose 1-phosphate + guanine. The enzyme catalyses inosine + phosphate = alpha-D-ribose 1-phosphate + hypoxanthine. It carries out the reaction thymidine + phosphate = 2-deoxy-alpha-D-ribose 1-phosphate + thymine. The catalysed reaction is uridine + phosphate = alpha-D-ribose 1-phosphate + uracil. It catalyses the reaction xanthosine + phosphate = alpha-D-ribose 1-phosphate + xanthine. In terms of biological role, catalyzes the phosphorolysis of diverse nucleosides, yielding D-ribose 1-phosphate and the respective free bases. Can use uridine, adenosine, guanosine, cytidine, thymidine, inosine and xanthosine as substrates. Also catalyzes the reverse reactions. The chain is Pyrimidine/purine nucleoside phosphorylase from Escherichia coli (strain ATCC 8739 / DSM 1576 / NBRC 3972 / NCIMB 8545 / WDCM 00012 / Crooks).